The following is a 705-amino-acid chain: Translation factor GUF1 homolog, mitochondrial (705 aa).

The N-terminal 20 residues, 1-20 (MVCHRYLLGLGASTLCLRRL), are a transit peptide targeting the mitochondrion. The tract at residues 72–92 (PVEDNGTTNLTGTGEATSETG) is disordered. Over residues 76-90 (NGTTNLTGTGEATSE) the composition is skewed to polar residues. One can recognise a tr-type G domain in the interval 105 to 288 (NRMRNFCIIA…AVVERIPPPK (184 aa)). Residues 114-121 (AHVDHGKS), 181-185 (DTPGH), and 235-238 (NKID) contribute to the GTP site.

Belongs to the TRAFAC class translation factor GTPase superfamily. Classic translation factor GTPase family. LepA subfamily.

It localises to the mitochondrion inner membrane. The catalysed reaction is GTP + H2O = GDP + phosphate + H(+). In terms of biological role, promotes mitochondrial protein synthesis. May act as a fidelity factor of the translation reaction, by catalyzing a one-codon backward translocation of tRNAs on improperly translocated ribosomes. Binds to mitochondrial ribosomes in a GTP-dependent manner. The sequence is that of Translation factor GUF1 homolog, mitochondrial from Babesia bovis.